Here is a 305-residue protein sequence, read N- to C-terminus: tRNA dimethylallyltransferase (305 aa).

14 to 21 serves as a coordination point for ATP; that stretch reads GPTASGKT. 16–21 contacts substrate; it reads TASGKT. Interaction with substrate tRNA regions lie at residues 39 to 42, 163 to 167, and 243 to 248; these read DSAL, QRIIR, and RCVGYR.

Belongs to the IPP transferase family. Monomer. Requires Mg(2+) as cofactor.

The enzyme catalyses adenosine(37) in tRNA + dimethylallyl diphosphate = N(6)-dimethylallyladenosine(37) in tRNA + diphosphate. Functionally, catalyzes the transfer of a dimethylallyl group onto the adenine at position 37 in tRNAs that read codons beginning with uridine, leading to the formation of N6-(dimethylallyl)adenosine (i(6)A). The protein is tRNA dimethylallyltransferase of Vesicomyosocius okutanii subsp. Calyptogena okutanii (strain HA).